Here is a 453-residue protein sequence, read N- to C-terminus: tRNA modification GTPase MnmE (453 aa).

3 residues coordinate (6S)-5-formyl-5,6,7,8-tetrahydrofolate: arginine 22, glutamate 79, and lysine 119. A TrmE-type G domain is found at 215–376; the sequence is GMKVVIAGRP…LRQHLKECMG (162 aa). Residue asparagine 225 participates in K(+) binding. Residues 225-230, 244-250, 269-272, and 334-337 contribute to the GTP site; these read NAGKSS, TDIAGTT, DTAG, and NKAD. Serine 229 is a binding site for Mg(2+). Residues threonine 244, isoleucine 246, and threonine 249 each coordinate K(+). Threonine 250 is a binding site for Mg(2+). (6S)-5-formyl-5,6,7,8-tetrahydrofolate is bound at residue lysine 453.

This sequence belongs to the TRAFAC class TrmE-Era-EngA-EngB-Septin-like GTPase superfamily. TrmE GTPase family. As to quaternary structure, homodimer. Heterotetramer of two MnmE and two MnmG subunits. Requires K(+) as cofactor.

It is found in the cytoplasm. Functionally, exhibits a very high intrinsic GTPase hydrolysis rate. Involved in the addition of a carboxymethylaminomethyl (cmnm) group at the wobble position (U34) of certain tRNAs, forming tRNA-cmnm(5)s(2)U34. The chain is tRNA modification GTPase MnmE from Vibrio cholerae serotype O1 (strain ATCC 39541 / Classical Ogawa 395 / O395).